The following is an 877-amino-acid chain: Phosphoenolpyruvate carboxylase (877 aa).

Residues His138 and Lys543 contribute to the active site.

The protein belongs to the PEPCase type 1 family. Mg(2+) serves as cofactor.

It carries out the reaction oxaloacetate + phosphate = phosphoenolpyruvate + hydrogencarbonate. Forms oxaloacetate, a four-carbon dicarboxylic acid source for the tricarboxylic acid cycle. The polypeptide is Phosphoenolpyruvate carboxylase (Aeromonas hydrophila subsp. hydrophila (strain ATCC 7966 / DSM 30187 / BCRC 13018 / CCUG 14551 / JCM 1027 / KCTC 2358 / NCIMB 9240 / NCTC 8049)).